The following is a 169-amino-acid chain: uncharacterized protein (169 aa).

This is an uncharacterized protein from Saccharomyces cerevisiae (strain ATCC 204508 / S288c) (Baker's yeast).